The primary structure comprises 138 residues: Putative phosphatidylinositol 3,4,5-trisphosphate 3-phosphatase TPTE2P1 (138 aa).

A C2 tensin-type domain is found at 1–75 (MPAAFPCVFP…FAVEILFGMV (75 aa)).

The chain is Putative phosphatidylinositol 3,4,5-trisphosphate 3-phosphatase TPTE2P1 (TPTE2P1) from Homo sapiens (Human).